Consider the following 368-residue polypeptide: Proteinase-activated receptor 3 (368 aa).

Residues 1 to 21 (MEMKVLILVGVRLLFLPTTVC) form the signal peptide. Positions 22–37 (QSGMKHVSDNSALTAE) are cleaved as a propeptide — removed for receptor activation. Residues 38–93 (SFNGNEHSFEEFPLSDIEGWTGATTTIKAKCPEESITTLHVNNATMGYLRSSLSTK) lie on the Extracellular side of the membrane. N80 carries N-linked (GlcNAc...) asparagine glycosylation. The helical transmembrane segment at 94–114 (VIPAIYILVFVIGVPANIVTL) threads the bilayer. The Cytoplasmic portion of the chain corresponds to 115–123 (WKLSSRTKS). A helical membrane pass occupies residues 124–144 (ICLVIFHTNLAIADLLFCVTL). The Extracellular segment spans residues 145 to 166 (PFKIAYHLNGNDWVFGEVMCRV). Cysteines 164 and 243 form a disulfide. A helical transmembrane segment spans residues 167–187 (TTVAFYGNMYCAILILTCMGI). The Cytoplasmic segment spans residues 188-208 (NRYLATVHPFTYRKLPKRNFT). The helical transmembrane segment at 209-229 (LLMCGVVWVMVVLYMLPLAIL) threads the bilayer. Residues 230 to 257 (KQEYHLVQPGITTCHDVHDTCESPLPFQ) are Extracellular-facing. The chain crosses the membrane as a helical span at residues 258–278 (FYYFVSLAFFGFLIPFVVSVF). Over 279–300 (CYTTLIHKLNAQDRKWLRYIKA) the chain is Cytoplasmic. Residues 301-321 (VLLILVIFTICFAPTNIILII) form a helical membrane-spanning segment. Topologically, residues 322-338 (HHANYYYSNTDSLYFMY) are extracellular. A helical membrane pass occupies residues 339 to 359 (LIALCLGSLNSCLDPFLYFIM). The Cytoplasmic segment spans residues 360–368 (SKIVDQLTS).

This sequence belongs to the G-protein coupled receptor 1 family. Interacts with INSC/inscuteable and GPSM2. In terms of processing, a proteolytic cleavage generates a new N-terminus that functions as a tethered ligand.

Its subcellular location is the cell membrane. Its function is as follows. Receptor for activated thrombin coupled to G proteins that stimulate phosphoinositide hydrolysis. This is Proteinase-activated receptor 3 (F2rl2) from Rattus norvegicus (Rat).